Here is a 644-residue protein sequence, read N- to C-terminus: DNA mismatch repair protein MutL (644 aa).

A compositionally biased stretch (basic and acidic residues) spans 340–360 (KKEKDESVQEQFKFEHTKPRE). Residues 340 to 425 (KKEKDESVQE…ETVREEKEWT (86 aa)) form a disordered region. Over residues 387–400 (QLWQPPKQEWQPPQ) the composition is skewed to low complexity. Residues 416–425 (ETVREEKEWT) show a composition bias toward basic and acidic residues.

It belongs to the DNA mismatch repair MutL/HexB family.

In terms of biological role, this protein is involved in the repair of mismatches in DNA. It is required for dam-dependent methyl-directed DNA mismatch repair. May act as a 'molecular matchmaker', a protein that promotes the formation of a stable complex between two or more DNA-binding proteins in an ATP-dependent manner without itself being part of a final effector complex. The protein is DNA mismatch repair protein MutL of Bacillus mycoides (strain KBAB4) (Bacillus weihenstephanensis).